The sequence spans 376 residues: Copper-containing nitrite reductase (376 aa).

The segment at residues M1–G33 is a signal peptide (tat-type signal). At Q34 the chain carries Pyrrolidone carboxylic acid. Plastocyanin-like domains lie at Q34–I211 and Y212–T376. Cu cation contacts are provided by H131, H136, H171, C172, H181, M186, and H342.

It belongs to the multicopper oxidase family. Homotrimer. Requires Cu(2+) as cofactor. It depends on Cu(+) as a cofactor. FAD is required as a cofactor. Post-translationally, predicted to be exported by the Tat system. The position of the signal peptide cleavage has been experimentally proven.

It is found in the periplasm. It catalyses the reaction nitric oxide + Fe(III)-[cytochrome c] + H2O = Fe(II)-[cytochrome c] + nitrite + 2 H(+). The protein operates within nitrogen metabolism; nitrate reduction (denitrification); dinitrogen from nitrate: step 2/4. The polypeptide is Copper-containing nitrite reductase (nirK) (Alcaligenes faecalis).